Reading from the N-terminus, the 862-residue chain is MKSSEVRQKFLEFFETHGHTIVPSSPLVPGNDPTLLFTNAGMVQFKDVFLGQDKRPYVRAASAQRCVRAGGKHNDLENVGYTARHHTFFEMLGNFSFGDYFKRNAIRFAWEFLTDILKIPRERLWITVYAEDDEAADIWLNEVGIDSSRFTRIATQDNFWQMGDTGPCGPCSEIFYDHGPEIPGGPPGTPNADGDRYVEIWNLVFMQYNRDSAGTLHPLPRPSVDTGMGLERISAVMQQVHSNYEIDLFQQLIKAAARATNTTDLSSSSLNVIADHIRACSFLIADGVIPGNEGRGYVLRRIIRRAIRHGYKLGQKQPFFHQLVEDLASVMGQAYPELMEAKTRVSAVLKQEEERFAETLENGMQVLEAALRRGDRMLDGETLFRLYDTFGFPLDLTADIARERGIAIDEAGFDQAMEQQRERARTTSKFIMQEAIAYSGPSTTFHGYESLRQEGQVLAIYKEGSRVEFIEAGDEAVIVLDKTPFYAESGGQVGDSGELLAANGTFAVADTQKIQADVFGHKGLLRSGRLATGDAVLAEVDRAARARTERNHSVTHLMHKALREVLGHHVQQKGSLVDANKTRFDFAHNQPVTDAEIRKVEMLVNAEILANAATEARMMAIEDAKKSGAMMLFGEKYSDEVRVLDIGTSRELCGGTHVKRTGDIGLFKIVAESGVAAGVRRVEAVTGERALTYIQEQELQLQRVAAAVKAQPQDAAARITQILDNVKHLERELGRMKSKLASSQGDDFADRVREIKGVKVLAVCLEEADPKTLREAVDKFKNKFKSCVTVLAAVEDGKVKLIAGVTSDLTARLKAGDLVNFVAQQVGGKGGGRADLAQAGGTVPDSLPAALESVASWVEQHL.

The Zn(2+) site is built by H552, H556, C653, and H657.

Belongs to the class-II aminoacyl-tRNA synthetase family. It depends on Zn(2+) as a cofactor.

The protein localises to the cytoplasm. It carries out the reaction tRNA(Ala) + L-alanine + ATP = L-alanyl-tRNA(Ala) + AMP + diphosphate. Its function is as follows. Catalyzes the attachment of alanine to tRNA(Ala) in a two-step reaction: alanine is first activated by ATP to form Ala-AMP and then transferred to the acceptor end of tRNA(Ala). Also edits incorrectly charged Ser-tRNA(Ala) and Gly-tRNA(Ala) via its editing domain. The polypeptide is Alanine--tRNA ligase (Nitrosospira multiformis (strain ATCC 25196 / NCIMB 11849 / C 71)).